Consider the following 40-residue polypeptide: Ostricacin-3 (40 aa).

3 disulfide bridges follow: Cys8–Cys36, Cys15–Cys30, and Cys20–Cys37.

Its subcellular location is the secreted. In terms of biological role, has antibacterial activity against the Gram-positive bacterium S.aureus 1056 MRSA (MIC=2.78 ug/ml) and the Gram-negative bacterium E.coli O157:H7 (MIC=2.41 ug/ml). Does not have antifungal activity against the yeast C.albicans 3153A. The sequence is that of Ostricacin-3 from Struthio camelus (Common ostrich).